The following is a 556-amino-acid chain: Vetispiradiene synthase 1 (556 aa).

Mg(2+)-binding residues include Asp309, Asp313, Asp452, Thr456, and Glu460. The DDXXD motif signature appears at 309-313 (DDTFD).

Belongs to the terpene synthase family. Tpsa subfamily. Mg(2+) is required as a cofactor.

The protein localises to the cytoplasm. It carries out the reaction (2E,6E)-farnesyl diphosphate = (-)-vetispiradiene + diphosphate. It functions in the pathway secondary metabolite biosynthesis; terpenoid biosynthesis. Sesquiterpene synthase that catalyzes the formation of vetispiradiene from trans,trans-farnesyl diphosphate. The initial internal cyclization produces the monocyclic intermediate germacrene A. The protein is Vetispiradiene synthase 1 (PVS1) of Solanum tuberosum (Potato).